The sequence spans 231 residues: Endonuclease NucS (231 aa).

This sequence belongs to the NucS endonuclease family.

It is found in the cytoplasm. In terms of biological role, cleaves both 3' and 5' ssDNA extremities of branched DNA structures. The polypeptide is Endonuclease NucS (Micrococcus luteus (strain ATCC 4698 / DSM 20030 / JCM 1464 / CCM 169 / CCUG 5858 / IAM 1056 / NBRC 3333 / NCIMB 9278 / NCTC 2665 / VKM Ac-2230) (Micrococcus lysodeikticus)).